The chain runs to 333 residues: tRNA N6-adenosine threonylcarbamoyltransferase (333 aa).

Residues H111 and H115 each coordinate Fe cation. Substrate contacts are provided by residues 134–138 (LVSGG), D167, G180, and N272. D300 is a binding site for Fe cation.

It belongs to the KAE1 / TsaD family. The cofactor is Fe(2+).

The protein resides in the cytoplasm. The enzyme catalyses L-threonylcarbamoyladenylate + adenosine(37) in tRNA = N(6)-L-threonylcarbamoyladenosine(37) in tRNA + AMP + H(+). Its function is as follows. Required for the formation of a threonylcarbamoyl group on adenosine at position 37 (t(6)A37) in tRNAs that read codons beginning with adenine. Is involved in the transfer of the threonylcarbamoyl moiety of threonylcarbamoyl-AMP (TC-AMP) to the N6 group of A37, together with TsaE and TsaB. TsaD likely plays a direct catalytic role in this reaction. In Legionella pneumophila subsp. pneumophila (strain Philadelphia 1 / ATCC 33152 / DSM 7513), this protein is tRNA N6-adenosine threonylcarbamoyltransferase.